The primary structure comprises 781 residues: ATP-dependent 6-phosphofructokinase (781 aa).

Residues 1–394 (MATWMEGKYV…NLATYIKLSK (394 aa)) form an N-terminal catalytic PFK domain 1 region. ATP is bound by residues Gly27, 90–91 (RC), and 120–123 (GDGS). Residue Asp121 participates in Mg(2+) binding. Substrate is bound by residues 166 to 168 (SID), Arg203, 210 to 212 (MGR), Glu266, Arg294, and 300 to 303 (HVQR). The active-site Proton acceptor is the Asp168. Residues 395 to 409 (IEQPRQSVMSSENNL) are interdomain linker. The tract at residues 410 to 781 (RIGIVNVGAP…ESIMAGTDRK (372 aa)) is C-terminal regulatory PFK domain 2. Beta-D-fructose 2,6-bisphosphate-binding positions include Arg479, 537–541 (TISNN), Arg575, 582–584 (MGG), Asp638, Arg664, 670–673 (HMQQ), and Arg745.

This sequence belongs to the phosphofructokinase type A (PFKA) family. ATP-dependent PFK group I subfamily. Eukaryotic two domain clade 'E' sub-subfamily. In terms of assembly, homotetramer. The cofactor is Mg(2+).

Its subcellular location is the cytoplasm. The enzyme catalyses beta-D-fructose 6-phosphate + ATP = beta-D-fructose 1,6-bisphosphate + ADP + H(+). It functions in the pathway carbohydrate degradation; glycolysis; D-glyceraldehyde 3-phosphate and glycerone phosphate from D-glucose: step 3/4. Its activity is regulated as follows. Allosterically activated by ADP, AMP, or fructose 2,6-bisphosphate, and allosterically inhibited by ATP or citrate. In terms of biological role, catalyzes the phosphorylation of D-fructose 6-phosphate to fructose 1,6-bisphosphate by ATP, the first committing step of glycolysis. This chain is ATP-dependent 6-phosphofructokinase (PFK), found in Schistosoma mansoni (Blood fluke).